We begin with the raw amino-acid sequence, 549 residues long: Probable protein kinase UbiB (549 aa).

The region spanning 123–501 (DFEDTPLASA…QQKAHKSNYL (379 aa)) is the Protein kinase domain. Residues 129 to 137 (LASASISQV) and K152 contribute to the ATP site. The active-site Proton acceptor is the D287. The next 2 helical transmembrane spans lie at 498 to 518 (SNYL…LLNQ) and 520 to 540 (ATLW…VLGW).

The protein belongs to the ABC1 family. UbiB subfamily.

Its subcellular location is the cell inner membrane. It functions in the pathway cofactor biosynthesis; ubiquinone biosynthesis [regulation]. In terms of biological role, is probably a protein kinase regulator of UbiI activity which is involved in aerobic coenzyme Q (ubiquinone) biosynthesis. The chain is Probable protein kinase UbiB from Shewanella piezotolerans (strain WP3 / JCM 13877).